Consider the following 46-residue polypeptide: Protein krueppel (46 aa).

3 C2H2-type zinc fingers span residues 1–4, 10–32, and 38–46; these read MRLH, YQCL…LRVH, and YACEICPSR.

Belongs to the krueppel C2H2-type zinc-finger protein family.

The protein resides in the nucleus. Krueppel is a gap class segmentation protein. The protein is Protein krueppel (Kr) of Pholcus phalangioides (Longbodied cellar spider).